The following is a 146-amino-acid chain: Acidic phospholipase A2 D (146 aa).

The signal sequence occupies residues 1-21; that stretch reads MNPAHLLILAAVCVSPLGASS. The propeptide occupies 22-27; sequence NRPMPL. 7 disulfides stabilise this stretch: C38–C98, C53–C145, C55–C71, C70–C126, C77–C119, C87–C112, and C105–C117. Ca(2+) contacts are provided by Y54, G56, and G58. The active site involves H74. Ca(2+) is bound at residue D75. D120 is a catalytic residue.

Belongs to the phospholipase A2 family. Group I subfamily. D49 sub-subfamily. The cofactor is Ca(2+). As to expression, expressed by the venom gland.

The protein localises to the secreted. It catalyses the reaction a 1,2-diacyl-sn-glycero-3-phosphocholine + H2O = a 1-acyl-sn-glycero-3-phosphocholine + a fatty acid + H(+). In terms of biological role, PLA2 catalyzes the calcium-dependent hydrolysis of the 2-acyl groups in 3-sn-phosphoglycerides. The protein is Acidic phospholipase A2 D of Naja sputatrix (Malayan spitting cobra).